A 207-amino-acid chain; its full sequence is Guanylate kinase (207 aa).

The Guanylate kinase-like domain occupies 4-184 (GTLYIVSAPS…ALLDLKTIIR (181 aa)). 11–18 (APSGAGKS) is an ATP binding site.

It belongs to the guanylate kinase family.

It is found in the cytoplasm. It carries out the reaction GMP + ATP = GDP + ADP. Its function is as follows. Essential for recycling GMP and indirectly, cGMP. The chain is Guanylate kinase from Sodalis glossinidius (strain morsitans).